A 326-amino-acid chain; its full sequence is Heterodimeric geranylgeranyl pyrophosphate synthase small subunit, chloroplastic (326 aa).

The transit peptide at 1–33 (MLFSGSAIPLSSFCSLPEKPHTLPMKLSPAAIR) directs the protein to the chloroplast. 2 residues coordinate isopentenyl diphosphate: K88 and H120. Mg(2+) contacts are provided by D127 and D133. Residue R138 participates in dimethylallyl diphosphate binding. Isopentenyl diphosphate is bound at residue R139. Dimethylallyl diphosphate-binding residues include K220 and Q258. Positions 274–301 (GAEKGMMEMAEELKEKAKKELQVFDNKY) form a coiled coil.

The protein belongs to the FPP/GGPP synthase family. In terms of assembly, part of a heterodimeric geranyl(geranyl)diphosphate synthase. Interacts with GGPPS1 or GGPPS2, but not with GGPPS9. Interacts with LIL3.1 and LIL3.2. The cofactor is Mg(2+). Expressed ubiquitously.

The protein resides in the plastid. The protein localises to the chloroplast thylakoid membrane. Heterodimeric geranyl(geranyl)-diphosphate (GPP) synthase small subunit. The small subunit alone is inactive in vitro while the large subunit GGPPS1 catalyzes mainly the production of geranygeranyl-diphosphate in vitro. Upon association of the two subunits, the product profile changes and the production of gerany-diphosphate is strongly increased. The sequence is that of Heterodimeric geranylgeranyl pyrophosphate synthase small subunit, chloroplastic (GGR) from Arabidopsis thaliana (Mouse-ear cress).